The following is a 369-amino-acid chain: MPRPIQATIHTAALQQNLARARAAAPDARVWAVVKANAYGHGIERAFEGLRGADGFALLDLGEAERVRQLGWRGPILLLEGVFEPRDLELCSRLSLWHAVHCDEQIDWLSAHKTHAPHRVFLKMNSGMNRLGFPPARYRAAWARLNALPQVDEISFMTHFSDADGPRGIAHQIDAFCTATQDLPGERTVSNSAATLRHAGGDARVRGDWVRAGIVLYGSAADHPEHTAAHWGLAPTMTLSARIIGTQQLQAGDTVGYGSSFTADRPMTIGVVACGYADGYPRHAPTGTPVLVNGVRTRTVGRVSMDMITVDLTPLHEAGVEAGVGSEATLWGRASCGAVLCIDEVAQAAGTVGYELMCALAPRVPVVVD.

Lysine 35 acts as the Proton acceptor; specific for D-alanine in catalysis. Lysine 35 is subject to N6-(pyridoxal phosphate)lysine. Arginine 130 provides a ligand contact to substrate. Tyrosine 257 acts as the Proton acceptor; specific for L-alanine in catalysis. Methionine 305 lines the substrate pocket.

The protein belongs to the alanine racemase family. Pyridoxal 5'-phosphate serves as cofactor.

It carries out the reaction L-alanine = D-alanine. Its pathway is amino-acid biosynthesis; D-alanine biosynthesis; D-alanine from L-alanine: step 1/1. Its function is as follows. Catalyzes the interconversion of L-alanine and D-alanine. May also act on other amino acids. The protein is Alanine racemase (alr) of Paracidovorax citrulli (strain AAC00-1) (Acidovorax citrulli).